The primary structure comprises 166 residues: NAD(P)H-quinone oxidoreductase subunit I, chloroplastic (166 aa).

4Fe-4S ferredoxin-type domains are found at residues 55-84 (GRIHFEFDKCIACEVCVRVCPIDLPVVDWK) and 95-124 (LNYSIDFGICIFCGNCVEYCPTNCLSMTEE). Residues C64, C67, C70, C74, C104, C107, C110, and C114 each contribute to the [4Fe-4S] cluster site.

It belongs to the complex I 23 kDa subunit family. As to quaternary structure, NDH is composed of at least 16 different subunits, 5 of which are encoded in the nucleus. Requires [4Fe-4S] cluster as cofactor.

The protein resides in the plastid. It localises to the chloroplast thylakoid membrane. It catalyses the reaction a plastoquinone + NADH + (n+1) H(+)(in) = a plastoquinol + NAD(+) + n H(+)(out). It carries out the reaction a plastoquinone + NADPH + (n+1) H(+)(in) = a plastoquinol + NADP(+) + n H(+)(out). Functionally, NDH shuttles electrons from NAD(P)H:plastoquinone, via FMN and iron-sulfur (Fe-S) centers, to quinones in the photosynthetic chain and possibly in a chloroplast respiratory chain. The immediate electron acceptor for the enzyme in this species is believed to be plastoquinone. Couples the redox reaction to proton translocation, and thus conserves the redox energy in a proton gradient. The polypeptide is NAD(P)H-quinone oxidoreductase subunit I, chloroplastic (Bahiopsis tomentosa (Tecote)).